Here is a 292-residue protein sequence, read N- to C-terminus: Phosphoribulokinase, chromosomal (292 aa).

Position 12 to 20 (12 to 20 (GSSGAGTTS)) interacts with ATP.

It belongs to the phosphoribulokinase family. As to quaternary structure, homooctamer.

The catalysed reaction is D-ribulose 5-phosphate + ATP = D-ribulose 1,5-bisphosphate + ADP + H(+). The protein operates within carbohydrate biosynthesis; Calvin cycle. This chain is Phosphoribulokinase, chromosomal (cfxP), found in Cupriavidus necator (strain ATCC 17699 / DSM 428 / KCTC 22496 / NCIMB 10442 / H16 / Stanier 337) (Ralstonia eutropha).